We begin with the raw amino-acid sequence, 265 residues long: uncharacterized protein (265 aa).

The tract at residues 233-265 is disordered; the sequence is STACGSDQRPTRLPRASCSSRSISGSAARPWKR. Positions 247-265 are enriched in low complexity; that stretch reads RASCSSRSISGSAARPWKR.

This is an uncharacterized protein from Escherichia coli.